A 382-amino-acid polypeptide reads, in one-letter code: MQLDRLTLRDFRNITEAELRFGPGLNLITGPNGHGKSNLLEAIGLLATGRSFRRAPAAALRRYGQPWFHLRGETTARDLGHRLEFFGQAGRQAVKINGKSASAASALGQALAAVIVTPDTLRLVQDGPGVRRGFVDWVAFTCGRQQGALSHAVVAGDYQKALKARNRLLKLPRVEAGEWLAWESQLATLGAKMARNRYQVLQRLQPHLDRMLEDLGMAQRLTITLSCQLDRHGTHWAEDESAAASLYRRLLAENRASERRSGGTAIGPHRDDLVLRLDGHALAQFGSQGQQKRAALALKLAEAQLLQEQLGEWPLFVLDDPAAELDTDGMSRLMGLLARCGGQIFVASCRAQTIPWSGLAPQRFYVDQGVFALTEEIPLESL.

30–37 is an ATP binding site; sequence GPNGHGKS.

The protein belongs to the RecF family.

It localises to the cytoplasm. In terms of biological role, the RecF protein is involved in DNA metabolism; it is required for DNA replication and normal SOS inducibility. RecF binds preferentially to single-stranded, linear DNA. It also seems to bind ATP. This Magnetococcus marinus (strain ATCC BAA-1437 / JCM 17883 / MC-1) protein is DNA replication and repair protein RecF.